A 416-amino-acid chain; its full sequence is Tyrosine--tRNA ligase (416 aa).

L-tyrosine is bound at residue Y34. The short motif at 39-48 is the 'HIGH' region element; the sequence is PTGDSLHIGH. Y165 and Q169 together coordinate L-tyrosine. The 'KMSKS' region signature appears at 227–231; the sequence is KFGKT. Residue K230 participates in ATP binding. Residues 349-416 form the S4 RNA-binding domain; sequence KNIVEWLVDT…KKKYFLARVK (68 aa).

The protein belongs to the class-I aminoacyl-tRNA synthetase family. TyrS type 1 subfamily. Homodimer.

Its subcellular location is the cytoplasm. It carries out the reaction tRNA(Tyr) + L-tyrosine + ATP = L-tyrosyl-tRNA(Tyr) + AMP + diphosphate + H(+). Catalyzes the attachment of tyrosine to tRNA(Tyr) in a two-step reaction: tyrosine is first activated by ATP to form Tyr-AMP and then transferred to the acceptor end of tRNA(Tyr). The sequence is that of Tyrosine--tRNA ligase from Ligilactobacillus salivarius (strain UCC118) (Lactobacillus salivarius).